The chain runs to 147 residues: Ubiquitin-conjugating enzyme E2 D1 (147 aa).

Residues 1–147 (MALKRIQKEL…AREWTQKYAM (147 aa)) form the UBC core domain. Cys-85 serves as the catalytic Glycyl thioester intermediate.

Belongs to the ubiquitin-conjugating enzyme family. As to quaternary structure, component of a E3 ubiquitin ligase complex containing UBE2D1, SIAH1, CACYBP/SIP, SKP1, APC and TBL1X. Interacts with RNF11. In terms of processing, autoubiquitinated.

Its subcellular location is the cytoplasm. The enzyme catalyses S-ubiquitinyl-[E1 ubiquitin-activating enzyme]-L-cysteine + [E2 ubiquitin-conjugating enzyme]-L-cysteine = [E1 ubiquitin-activating enzyme]-L-cysteine + S-ubiquitinyl-[E2 ubiquitin-conjugating enzyme]-L-cysteine.. It catalyses the reaction S-ubiquitinyl-[E1 ubiquitin-activating enzyme]-L-cysteine + [acceptor protein]-L-lysine = [E1 ubiquitin-activating enzyme]-L-cysteine + N(6)-monoubiquitinyl-[acceptor protein]-L-lysine.. Its pathway is protein modification; protein ubiquitination. In terms of biological role, accepts ubiquitin from the E1 complex and catalyzes its covalent attachment to other proteins. In vitro catalyzes 'Lys-48'-linked polyubiquitination. Mediates the selective degradation of short-lived and abnormal proteins. Functions in the E6/E6-AP-induced ubiquitination of p53/TP53. Mediates ubiquitination of PEX5 and auto-ubiquitination of STUB1, TRAF6 and TRIM63/MURF1. Ubiquitinates STUB1-associated HSP90AB1 in vitro. Lacks inherent specificity for any particular lysine residue of ubiquitin. Essential for viral activation of IRF3. Mediates polyubiquitination of CYP3A4. The polypeptide is Ubiquitin-conjugating enzyme E2 D1 (UBE2D1) (Bos taurus (Bovine)).